Consider the following 164-residue polypeptide: LWamide neuropeptides (164 aa).

The propeptide occupies 1-6 (RSADAQ). The segment at 1 to 92 (RSADAQQHGL…WGRSADAQQP (92 aa)) is disordered. Tryptophan amide is present on residues W11 and W20. A propeptide spanning residues 23–27 (SADAQ) is cleaved from the precursor. A tryptophan amide mark is found at W32 and W41. A propeptide spanning residues 44–49 (SAEPGQ) is cleaved from the precursor. W53 and W62 each carry tryptophan amide. The propeptide occupies 65–70 (SAEPLQ). 2 positions are modified to tryptophan amide: W74 and W83. A propeptide spanning residues 86 to 90 (SADAQ) is cleaved from the precursor. W95, W106, and W115 each carry tryptophan amide. The propeptide occupies 118-123 (SADPGQ). Residues W127 and W137 each carry the tryptophan amide modification. Positions 140 to 164 (SYEPPQFEDLEDLKKKSAIPKPSEQ) are excised as a propeptide.

The protein belongs to the LWamide neuropeptide family.

The protein localises to the secreted. Metamorphosin A may be part of an internal signaling system involved in control of metamorphosis. In Actinia equina (Beadlet anemone), this protein is LWamide neuropeptides.